The following is a 408-amino-acid chain: FAD-dependent monooxygenase nscC (408 aa).

Residues 1–20 form the signal peptide; it reads MAPPLPILIIGAGISGLTTA. E34 and A45 together coordinate FAD. 2 N-linked (GlcNAc...) asparagine glycosylation sites follow: N91 and N103. Residue R119 participates in FAD binding. 2 N-linked (GlcNAc...) asparagine glycosylation sites follow: N170 and N231. FAD contacts are provided by D328 and G341.

It belongs to the paxM FAD-dependent monooxygenase family. It depends on FAD as a cofactor.

It participates in secondary metabolite biosynthesis. In terms of biological role, FAD-dependent monooxygenase; part of the gene cluster that mediates the biosynthesis of neosartoricin, a prenylated anthracenone that exhibits T-cell antiproliferative activity, suggestive of a physiological role as an immunosuppressive agent. The non-reducing polyketide synthase nscA probably synthesizes and cyclizes the decaketide backbone. The hydrolase nscB then mediates the product release through hydrolysis followed by spontaneous decarboxylation. The prenyltransferase nscD catalyzes the addition of the dimethylallyl group to the aromatic C5. The FAD-dependent monooxygenase nscC is then responsible for the stereospecific hydroxylation at C2. There is no gene encoding O-acetyltransferase in the nsc gene cluster; thus, the last step of 2-O-acetylation leading to neosartoricin may be catalyzed by an unidentified O-acetyltransferase. The protein is FAD-dependent monooxygenase nscC of Neosartorya fischeri (strain ATCC 1020 / DSM 3700 / CBS 544.65 / FGSC A1164 / JCM 1740 / NRRL 181 / WB 181) (Aspergillus fischerianus).